The primary structure comprises 114 residues: MEWSVENNLVCPTTGTAFALTSGAENLKFILWYKGDYFLRTGSVISPEDSGVLANGKKRNIKILHVFPYSNALWASFHNRIDCPGNGVVTINHCARQQQCVFTLCPYGARTVTG.

It belongs to the IraM/RssC family.

Its subcellular location is the cytoplasm. Involved in the stabilization of the sigma stress factor RpoS. The chain is Anti-adapter protein IraM from Citrobacter koseri (strain ATCC BAA-895 / CDC 4225-83 / SGSC4696).